Here is a 218-residue protein sequence, read N- to C-terminus: Ras-related protein Rab11E (218 aa).

20–27 (GDSGVGKS) provides a ligand contact to GTP. The Effector region motif lies at 42-50 (SKSTIGVEF). Residues 68-72 (DTAGQ) and 126-129 (NKSD) contribute to the GTP site. S-geranylgeranyl cysteine attachment occurs at residues C215 and C216.

The protein belongs to the small GTPase superfamily. Rab family.

It localises to the cell membrane. This chain is Ras-related protein Rab11E (RAB11E), found in Lotus japonicus (Lotus corniculatus var. japonicus).